The primary structure comprises 432 residues: 3-phosphoshikimate 1-carboxyvinyltransferase (432 aa).

3-phosphoshikimate contacts are provided by K23, S24, and R28. K23 contacts phosphoenolpyruvate. Residues G95 and R123 each contribute to the phosphoenolpyruvate site. Residues S167, Q169, D317, and K344 each coordinate 3-phosphoshikimate. Q169 serves as a coordination point for phosphoenolpyruvate. D317 serves as the catalytic Proton acceptor. Phosphoenolpyruvate contacts are provided by R348 and R390.

This sequence belongs to the EPSP synthase family. In terms of assembly, monomer.

Its subcellular location is the cytoplasm. It catalyses the reaction 3-phosphoshikimate + phosphoenolpyruvate = 5-O-(1-carboxyvinyl)-3-phosphoshikimate + phosphate. It functions in the pathway metabolic intermediate biosynthesis; chorismate biosynthesis; chorismate from D-erythrose 4-phosphate and phosphoenolpyruvate: step 6/7. Its function is as follows. Catalyzes the transfer of the enolpyruvyl moiety of phosphoenolpyruvate (PEP) to the 5-hydroxyl of shikimate-3-phosphate (S3P) to produce enolpyruvyl shikimate-3-phosphate and inorganic phosphate. In Staphylococcus aureus (strain JH9), this protein is 3-phosphoshikimate 1-carboxyvinyltransferase.